Consider the following 221-residue polypeptide: Adenylate kinase (221 aa).

10–15 (GAGKGT) contributes to the ATP binding site. The tract at residues 30–59 (STGDMLRAAVKAGTEFGVAAKKIMDAGGLV) is NMP. AMP is bound by residues T31, R36, 57-59 (GLV), 85-88 (GFPR), and Q92. The interval 122–159 (GRRVHPASGRTYHIKYNPPKVEGKDDVTGDALIQRDDD) is LID. ATP contacts are provided by residues R123 and 132 to 133 (TY). The AMP site is built by R156 and R167. G207 contacts ATP.

It belongs to the adenylate kinase family. Monomer.

It is found in the cytoplasm. It catalyses the reaction AMP + ATP = 2 ADP. It participates in purine metabolism; AMP biosynthesis via salvage pathway; AMP from ADP: step 1/1. Catalyzes the reversible transfer of the terminal phosphate group between ATP and AMP. Plays an important role in cellular energy homeostasis and in adenine nucleotide metabolism. This chain is Adenylate kinase, found in Polynucleobacter asymbioticus (strain DSM 18221 / CIP 109841 / QLW-P1DMWA-1) (Polynucleobacter necessarius subsp. asymbioticus).